Here is a 211-residue protein sequence, read N- to C-terminus: LexA repressor (211 aa).

The segment at residues 27 to 47 is a DNA-binding region (H-T-H motif); the sequence is QTEIARAFGFKGVRAVQHHLD. Active-site for autocatalytic cleavage activity residues include Ser-131 and Lys-168.

It belongs to the peptidase S24 family. As to quaternary structure, homodimer.

It catalyses the reaction Hydrolysis of Ala-|-Gly bond in repressor LexA.. In terms of biological role, represses a number of genes involved in the response to DNA damage (SOS response), including recA and lexA. In the presence of single-stranded DNA, RecA interacts with LexA causing an autocatalytic cleavage which disrupts the DNA-binding part of LexA, leading to derepression of the SOS regulon and eventually DNA repair. This chain is LexA repressor, found in Xylella fastidiosa (strain 9a5c).